A 240-amino-acid chain; its full sequence is UDP-2,3-diacylglucosamine hydrolase (240 aa).

The Mn(2+) site is built by aspartate 8, histidine 10, aspartate 41, asparagine 79, and histidine 114. Residue 79-80 (NR) participates in substrate binding. Aspartate 122, serine 160, asparagine 164, lysine 167, and histidine 195 together coordinate substrate. Residues histidine 195 and histidine 197 each coordinate Mn(2+).

This sequence belongs to the LpxH family. It depends on Mn(2+) as a cofactor.

It is found in the cell inner membrane. It catalyses the reaction UDP-2-N,3-O-bis[(3R)-3-hydroxytetradecanoyl]-alpha-D-glucosamine + H2O = 2-N,3-O-bis[(3R)-3-hydroxytetradecanoyl]-alpha-D-glucosaminyl 1-phosphate + UMP + 2 H(+). The protein operates within glycolipid biosynthesis; lipid IV(A) biosynthesis; lipid IV(A) from (3R)-3-hydroxytetradecanoyl-[acyl-carrier-protein] and UDP-N-acetyl-alpha-D-glucosamine: step 4/6. Hydrolyzes the pyrophosphate bond of UDP-2,3-diacylglucosamine to yield 2,3-diacylglucosamine 1-phosphate (lipid X) and UMP by catalyzing the attack of water at the alpha-P atom. Involved in the biosynthesis of lipid A, a phosphorylated glycolipid that anchors the lipopolysaccharide to the outer membrane of the cell. In Pectobacterium atrosepticum (strain SCRI 1043 / ATCC BAA-672) (Erwinia carotovora subsp. atroseptica), this protein is UDP-2,3-diacylglucosamine hydrolase.